Reading from the N-terminus, the 414-residue chain is Multifunctional CCA protein (414 aa).

ATP-binding residues include Gly-8 and Arg-11. Residues Gly-8 and Arg-11 each coordinate CTP. The Mg(2+) site is built by Glu-21 and Asp-23. Residues Arg-91, Arg-137, and Arg-140 each coordinate ATP. The CTP site is built by Arg-91, Arg-137, and Arg-140. Residues 228–329 (TGIHTMMTVA…LKLFDAIDVW (102 aa)) form the HD domain.

The protein belongs to the tRNA nucleotidyltransferase/poly(A) polymerase family. Bacterial CCA-adding enzyme type 1 subfamily. In terms of assembly, monomer. Can also form homodimers and oligomers. Mg(2+) is required as a cofactor. It depends on Ni(2+) as a cofactor.

It catalyses the reaction a tRNA precursor + 2 CTP + ATP = a tRNA with a 3' CCA end + 3 diphosphate. The enzyme catalyses a tRNA with a 3' CCA end + 2 CTP + ATP = a tRNA with a 3' CCACCA end + 3 diphosphate. Catalyzes the addition and repair of the essential 3'-terminal CCA sequence in tRNAs without using a nucleic acid template. Adds these three nucleotides in the order of C, C, and A to the tRNA nucleotide-73, using CTP and ATP as substrates and producing inorganic pyrophosphate. tRNA 3'-terminal CCA addition is required both for tRNA processing and repair. Also involved in tRNA surveillance by mediating tandem CCA addition to generate a CCACCA at the 3' terminus of unstable tRNAs. While stable tRNAs receive only 3'-terminal CCA, unstable tRNAs are marked with CCACCA and rapidly degraded. This chain is Multifunctional CCA protein, found in Pectobacterium carotovorum subsp. carotovorum (strain PC1).